A 471-amino-acid polypeptide reads, in one-letter code: (13S,14R)-1,13-dihydroxy-N-methylcanadine 13-O-acetyltransferase AT1 (471 aa).

It belongs to the plant acyltransferase family.

It carries out the reaction (13S,14R)-1,13-dihydroxy-N-methylcanadine + acetyl-CoA = (13S,14R)-13-O-acetyl-1-hydroxy-N-methylcanadine + CoA. The protein operates within alkaloid biosynthesis. Acetyltransferase involved in the biosynthesis of the benzylisoquinoline alkaloid noscapine. Converts (13S,14R)-1,13-dihydroxy-N-methylcanadine to (13S,14R)-13-O-acetyl-1-hydroxy-N-methylcanadine. This chain is (13S,14R)-1,13-dihydroxy-N-methylcanadine 13-O-acetyltransferase AT1, found in Papaver somniferum (Opium poppy).